The chain runs to 174 residues: RNA pyrophosphohydrolase (174 aa).

In terms of domain architecture, Nudix hydrolase spans 6-149 (GFRANVGIVI…KREVYRRAMK (144 aa)). The Nudix box signature appears at 38-59 (GGIDEGETAEQTMYRELYEEVG).

It belongs to the Nudix hydrolase family. RppH subfamily. It depends on a divalent metal cation as a cofactor.

Functionally, accelerates the degradation of transcripts by removing pyrophosphate from the 5'-end of triphosphorylated RNA, leading to a more labile monophosphorylated state that can stimulate subsequent ribonuclease cleavage. This Pseudoalteromonas atlantica (strain T6c / ATCC BAA-1087) protein is RNA pyrophosphohydrolase.